A 1219-amino-acid polypeptide reads, in one-letter code: Polyamine-transporting ATPase 13A3 (1219 aa).

Topologically, residues 1-28 are cytoplasmic; that stretch reads MDKEERKTINKGQEDEMEIHGYNLCRWK. The stretch at 29–49 is an intramembrane region; sequence LAMVFVGVICTGGFLLLLLYW. The Cytoplasmic segment spans residues 50-201; the sequence is LPEWRVKATC…IAVKVPSVFK (152 aa). A helical membrane pass occupies residues 202-222; the sequence is LLIKEVLNPFYIFQLFSVILW. Residues 223–228 are Lumenal-facing; that stretch reads SVDEYY. A helical membrane pass occupies residues 229 to 249; it reads YYALAIVIMSVVSIISSLYSI. At 250-405 the chain is on the cytoplasmic side; that stretch reads RKQYVMLHDM…KPTDFKLYRD (156 aa). Residues 406–426 form a helical membrane-spanning segment; the sequence is AYLFLLCLVVVAGIGFIYTII. At 427 to 444 the chain is on the lumenal side; it reads NSILNEKEVQEIIIKSLD. Residues 445–465 traverse the membrane as a helical segment; the sequence is IITITVPPALPAAMTAGIVYA. Over 466-936 the chain is Cytoplasmic; the sequence is QRRLKKVGIF…ALMTSFCVFK (471 aa). Residue D494 is the 4-aspartylphosphate intermediate of the active site. Residues D494 and T496 each coordinate Mg(2+). Residues 494 to 496, F624, R680, and D746 contribute to the ATP site; that span reads DKT. Residue S813 is modified to Phosphoserine. Residues D879 and D883 each coordinate Mg(2+). 879 to 883 contributes to the ATP binding site; it reads DGAND. A helical transmembrane segment spans residues 937–957; the sequence is FMALYSIIQYFSVTLLYSILS. Position 958 (N958) is a topological domain, lumenal. Residues 959 to 979 form a helical membrane-spanning segment; it reads LGDFQFLFIDLAIILVVVFTM. The Cytoplasmic segment spans residues 980-995; it reads SLNPAWKELVAQRPPS. A helical transmembrane segment spans residues 996–1016; sequence GLISGALLFSVLSQIVISVGF. The Lumenal portion of the chain corresponds to 1017 to 1066; sequence QSLGFFWVKQYKVCDPNSDVCNTTRSACWNSSHLYNGTELDSCKIQNYEN. A helical transmembrane segment spans residues 1067–1087; it reads TTVFFISSFQYLTVAVAFSKG. The Cytoplasmic portion of the chain corresponds to 1088–1098; sequence KPFRQPCYKNY. Residues 1099 to 1119 form a helical membrane-spanning segment; sequence FFVISVIILYVFILFIMLHPV. The Lumenal portion of the chain corresponds to 1120–1136; sequence ASVDQVLEIMCVPYQWR. Residues 1137 to 1157 form a helical membrane-spanning segment; the sequence is IYMLIIVLINAFVSITVEESV. Over 1158–1219 the chain is Cytoplasmic; that stretch reads DRWGKCCLSW…NGSCQIITIA (62 aa).

The protein belongs to the cation transport ATPase (P-type) (TC 3.A.3) family. Type V subfamily. In terms of tissue distribution, expression is greatest in liver, followed by kidney, colon, stomach, brain and small intestine. Isoform 1 is highly expressed in the kidney while isoform 2 is highly expressed in the brain.

The protein resides in the recycling endosome membrane. It localises to the early endosome membrane. The protein localises to the late endosome membrane. It catalyses the reaction putrescine(out) + ATP + H2O = putrescine(in) + ADP + phosphate + H(+). Functionally, ATP-driven pump involved in endocytosis-dependent polyamine transport. Uses ATP as an energy source to transfer polyamine precursor putrescine from the endosomal compartment to the cytosol. This chain is Polyamine-transporting ATPase 13A3, found in Mus musculus (Mouse).